The primary structure comprises 423 residues: Peroxisome biogenesis factor 2 (423 aa).

Positions 1–26 (MVDNYNNNNILPTNTSTTTTTNTTIT) are enriched in low complexity. The tract at residues 1–46 (MVDNYNNNNILPTNTSTTTTTNTTITPTPPLPPPPPISNILDNNNN) is disordered. At 1-109 (MVDNYNNNNI…NIKRPSTSIV (109 aa)) the chain is on the peroxisomal matrix side. The span at 27-37 (PTPPLPPPPPI) shows a compositional bias: pro residues. The helical transmembrane segment at 110-136 (RVSQLDSARLDEEILDLLRSQFMKIFT) threads the bilayer. At 137-142 (FFKPNF) the chain is on the cytoplasmic side. The chain crosses the membrane as a helical span at residues 143–168 (IHNFQPEINLVLKSVIYKLSIFNLGT). At 169–197 (TYGNQLQNLTYRNEKAFDPIRGSDQLNKL) the chain is on the peroxisomal matrix side. Residues 198–224 (TMRQKWLSGLINIGGEWLWTRINRYLI) traverse the membrane as a helical segment. The Cytoplasmic segment spans residues 225-234 (NNNWSEHPPN). Residues 235 to 265 (DIRKKFWNFLNFAESAYKALALLNFLTFLFN) traverse the membrane as a helical segment. The Peroxisomal matrix segment spans residues 266–292 (GKYVTLVNRILHMRLVYAHPTLSRNIS). Residues 293–316 (FEYMNRLLVWHGFTEFILFIMPLI) traverse the membrane as a helical segment. The Cytoplasmic segment spans residues 317–423 (NIDRIKSFLY…SNIKRFSIQD (107 aa)). The Zn(2+) site is built by C369, C372, C385, H387, C390, C393, C406, and C409. The segment at 369–410 (CPICMNDPISMPYSADCGHLFCYYCIKTSCMIDSSFTCPRCN) adopts an RING-type zinc-finger fold.

This sequence belongs to the pex2/pex10/pex12 family. Component of the PEX2-PEX10-PEX12 retrotranslocation channel.

It localises to the peroxisome membrane. It carries out the reaction [E2 ubiquitin-conjugating enzyme]-S-ubiquitinyl-L-cysteine + [acceptor protein]-L-cysteine = [E2 ubiquitin-conjugating enzyme]-L-cysteine + [acceptor protein]-S-ubiquitinyl-L-cysteine.. The protein operates within protein modification; protein ubiquitination. Functionally, E3 ubiquitin-protein ligase component of a retrotranslocation channel required for peroxisome organization by mediating export of the PEX5 receptor from peroxisomes to the cytosol, thereby promoting PEX5 recycling. The retrotranslocation channel is composed of PEX2, PEX10 and PEX12; each subunit contributing transmembrane segments that coassemble into an open channel that specifically allows the passage of PEX5 through the peroxisomal membrane. PEX2 also regulates peroxisome organization by acting as a E3 ubiquitin-protein ligase. PEX2 ubiquitinates PEX5 during its passage through the retrotranslocation channel: catalyzes monoubiquitination of PEX5 at 'Cys-11', a modification that acts as a signal for PEX5 extraction into the cytosol. The polypeptide is Peroxisome biogenesis factor 2 (pex2) (Dictyostelium discoideum (Social amoeba)).